A 360-amino-acid polypeptide reads, in one-letter code: Protein Wnt-2 (360 aa).

The signal sequence occupies residues Met1–Ser25. Intrachain disulfides connect Cys76–Cys87, Cys127–Cys135, Cys137–Cys157, Cys206–Cys220, Cys208–Cys215, Cys278–Cys309, Cys294–Cys304, Cys308–Cys348, Cys324–Cys339, Cys326–Cys336, and Cys331–Cys332. The O-palmitoleoyl serine; by PORCN moiety is linked to residue Ser212. Asn295 carries N-linked (GlcNAc...) asparagine glycosylation.

It belongs to the Wnt family. Palmitoleoylation is required for efficient binding to frizzled receptors. Depalmitoleoylation leads to Wnt signaling pathway inhibition.

The protein localises to the secreted. It localises to the extracellular space. Its subcellular location is the extracellular matrix. In terms of biological role, ligand for members of the frizzled family of seven transmembrane receptors. Functions in the canonical Wnt signaling pathway that results in activation of transcription factors of the TCF/LEF family. Functions as a upstream regulator of FGF10 expression. Plays an important role in embryonic lung development. May contribute to embryonic brain development by regulating the proliferation of dopaminergic precursors and neurons. The sequence is that of Protein Wnt-2 (WNT2) from Loxodonta africana (African elephant).